The following is a 141-amino-acid chain: Hemoglobin subunit alpha-1 (141 aa).

In terms of domain architecture, Globin spans valine 1–arginine 141. Histidine 58 contributes to the O2 binding site. Histidine 87 is a heme b binding site.

The protein belongs to the globin family. As to quaternary structure, heterotetramer of two alpha chains and two beta chains. In terms of tissue distribution, red blood cells.

Its function is as follows. Involved in oxygen transport from the lung to the various peripheral tissues. This chain is Hemoglobin subunit alpha-1, found in Varecia variegata (Black-and-white ruffed lemur).